Reading from the N-terminus, the 111-residue chain is Nucleoid-associated protein NMA1657 (111 aa).

It belongs to the YbaB/EbfC family. Homodimer.

It localises to the cytoplasm. Its subcellular location is the nucleoid. In terms of biological role, binds to DNA and alters its conformation. May be involved in regulation of gene expression, nucleoid organization and DNA protection. The sequence is that of Nucleoid-associated protein NMA1657 from Neisseria meningitidis serogroup A / serotype 4A (strain DSM 15465 / Z2491).